The primary structure comprises 82 residues: Large ribosomal subunit protein uL23 (82 aa).

Belongs to the universal ribosomal protein uL23 family. In terms of assembly, part of the 50S ribosomal subunit. Contacts protein L29.

In terms of biological role, binds to 23S rRNA. One of the proteins that surrounds the polypeptide exit tunnel on the outside of the ribosome. This Methanosarcina mazei (strain ATCC BAA-159 / DSM 3647 / Goe1 / Go1 / JCM 11833 / OCM 88) (Methanosarcina frisia) protein is Large ribosomal subunit protein uL23.